Reading from the N-terminus, the 204-residue chain is Large ribosomal subunit protein uL10 (204 aa).

The disordered stretch occupies residues 170-204; that stretch reads AADPSVIGGAGEASDQEPKTTETPEASAAQDNTNE. Residues 192-204 are compositionally biased toward polar residues; it reads TPEASAAQDNTNE.

It belongs to the universal ribosomal protein uL10 family. As to quaternary structure, part of the ribosomal stalk of the 50S ribosomal subunit. The N-terminus interacts with L11 and the large rRNA to form the base of the stalk. The C-terminus forms an elongated spine to which L12 dimers bind in a sequential fashion forming a multimeric L10(L12)X complex.

In terms of biological role, forms part of the ribosomal stalk, playing a central role in the interaction of the ribosome with GTP-bound translation factors. The chain is Large ribosomal subunit protein uL10 from Cutibacterium acnes (strain DSM 16379 / KPA171202) (Propionibacterium acnes).